We begin with the raw amino-acid sequence, 199 residues long: Recombination protein RecR (199 aa).

The C4-type zinc finger occupies 57–72; it reads CQSCRTYTEESLCPIC. Residues 81–176 form the Toprim domain; it reads STICVVETPA…VISRIAHGVP (96 aa).

The protein belongs to the RecR family.

Its function is as follows. May play a role in DNA repair. It seems to be involved in an RecBC-independent recombinational process of DNA repair. It may act with RecF and RecO. In Shewanella sp. (strain ANA-3), this protein is Recombination protein RecR.